An 837-amino-acid polypeptide reads, in one-letter code: Tuftelin-interacting protein 11 (837 aa).

2 stretches are compositionally biased toward basic and acidic residues: residues 1-13 (MSLS…GEGR) and 53-64 (VWAERDSDDERP). Disordered regions lie at residues 1-21 (MSLS…DDER), 53-72 (VWAE…KRAR), and 85-133 (LKKG…KGFA). Residues 1 to 50 (MSLSHLYRDGEGRIDDDDDERENFEITDWDLQNEFNPNRQRHWQTKEEAT) are required for interaction with DHX15. Phosphoserine is present on residues S2, S59, and S98. Acidic residues predominate over residues 91–102 (EEAELEDSDDEE). A compositionally biased stretch (basic and acidic residues) spans 103 to 116 (KPVKQDDFPKDFGP). Residue S144 is modified to Phosphoserine. Residues 149–195 (TKGIGQKLLQKMGYVPGRGLGKNAQGIINPIEAKQRKGKGAVGAYGS) form the G-patch domain. Residues 179 to 236 (IEAKQRKGKGAVGAYGSERTTQSMQDFPVVDSEEEAEEEFQKELSQWRKDPSGSKKKP) are disordered. S210 carries the post-translational modification Phosphoserine. The segment covering 217–231 (EFQKELSQWRKDPSG) has biased composition (basic and acidic residues). Residues 700-705 (VKDKFN) carry the Nuclear localization signal motif. The segment at 710 to 734 (IMNRAVSSNVGAYMQPGARENIAYL) is required for nuclear speckle localization.

The protein belongs to the TFP11/STIP family. Identified in the spliceosome C complex. Found in the Intron Large (IL) complex, a post-mRNA release spliceosomal complex containing the excised intron, U2, U5 and U6 snRNPs, and splicing factors. Interacts with TUFT1. Interacts with DHX15; indicative for a recruitment of DHX15 to the IL complex. Interacts with GCFC2.

The protein localises to the cytoplasm. Its subcellular location is the nucleus. In terms of biological role, involved in pre-mRNA splicing, specifically in spliceosome disassembly during late-stage splicing events. Intron turnover seems to proceed through reactions in two lariat-intron associated complexes termed Intron Large (IL) and Intron Small (IS). In cooperation with DHX15 seems to mediate the transition of the U2, U5 and U6 snRNP-containing IL complex to the snRNP-free IS complex leading to efficient debranching and turnover of excised introns. May play a role in the differentiation of ameloblasts and odontoblasts or in the forming of the enamel extracellular matrix. The polypeptide is Tuftelin-interacting protein 11 (TFIP11) (Pongo abelii (Sumatran orangutan)).